The primary structure comprises 203 residues: Holliday junction branch migration complex subunit RuvA (203 aa).

The tract at residues 1 to 64 is domain I; that stretch reads MIGRLRGYIL…EDAQLLYGFN (64 aa). A domain II region spans residues 65 to 142; that stretch reads DKQERALFRE…KGLNGDLFNN (78 aa). Residues 143 to 154 form a flexible linker region; sequence SSEITLPTAAQA. Residues 155 to 203 are domain III; that stretch reads AELDAEAEAASALVALGYKPQEASRMVSKIAKPGADCETLIRDALRAAL.

This sequence belongs to the RuvA family. Homotetramer. Forms an RuvA(8)-RuvB(12)-Holliday junction (HJ) complex. HJ DNA is sandwiched between 2 RuvA tetramers; dsDNA enters through RuvA and exits via RuvB. An RuvB hexamer assembles on each DNA strand where it exits the tetramer. Each RuvB hexamer is contacted by two RuvA subunits (via domain III) on 2 adjacent RuvB subunits; this complex drives branch migration. In the full resolvosome a probable DNA-RuvA(4)-RuvB(12)-RuvC(2) complex forms which resolves the HJ.

It localises to the cytoplasm. In terms of biological role, the RuvA-RuvB-RuvC complex processes Holliday junction (HJ) DNA during genetic recombination and DNA repair, while the RuvA-RuvB complex plays an important role in the rescue of blocked DNA replication forks via replication fork reversal (RFR). RuvA specifically binds to HJ cruciform DNA, conferring on it an open structure. The RuvB hexamer acts as an ATP-dependent pump, pulling dsDNA into and through the RuvAB complex. HJ branch migration allows RuvC to scan DNA until it finds its consensus sequence, where it cleaves and resolves the cruciform DNA. This chain is Holliday junction branch migration complex subunit RuvA, found in Serratia proteamaculans (strain 568).